The chain runs to 201 residues: Natural cytotoxicity triggering receptor 3 (201 aa).

Positions 1–18 are cleaved as a signal peptide; that stretch reads MAWMLLLILIMVYPGSCA. The Ig-like domain maps to 19–126; sequence LWVSQPPEIR…VGTGNGTRLV (108 aa). Residues 19 to 133 lie on the Extracellular side of the membrane; that stretch reads LWVSQPPEIR…RLVVEKEYPQ (115 aa). The cysteines at positions 39 and 108 are disulfide-linked. Residues Asn42 and Asn121 are each glycosylated (N-linked (GlcNAc...) asparagine). The helical transmembrane segment at 134-154 threads the bilayer; the sequence is LGAGTVLLLRAGFYAVSFLSV. The Cytoplasmic portion of the chain corresponds to 155 to 201; the sequence is AMGSTLYYQGKCLTWKGPRRQLPAVVPGPLPPPCGSSAHLLPPVPGG.

Belongs to the natural cytotoxicity receptor (NCR) family. Homodimer in the unliganted form. Interacts with CD3Z. Interacts with and is activated by binding to NCR3LG1. Interacts with and is activated by binding to BAG6. Interacts with and is inhibited by binding to LGALS3.

It is found in the cell membrane. Its function is as follows. Cell membrane receptor of natural killer/NK cells that is activated by binding of extracellular ligands including BAG6 and NCR3LG1. Stimulates NK cells cytotoxicity toward neighboring cells producing these ligands. It controls, for instance, NK cells cytotoxicity against tumor cells. Engagement of NCR3 by BAG6 also promotes myeloid dendritic cells (DC) maturation, both through killing DCs that did not acquire a mature phenotype, and inducing the release by NK cells of TNFA and IFNG that promote DC maturation. This Macaca mulatta (Rhesus macaque) protein is Natural cytotoxicity triggering receptor 3 (NCR3).